Reading from the N-terminus, the 617-residue chain is Dopamine beta-hydroxylase (617 aa).

The Cytoplasmic segment spans residues 1-16 (MPALSRWASLPGPSMR). The helical; Signal-anchor for type II membrane protein transmembrane segment at 17-37 (EAAFMYSTAVAIFLVILVAAL) threads the bilayer. Residues 38–617 (QGSAPRESPL…TVVSIGGGKG (580 aa)) lie on the Intragranular side of the membrane. One can recognise a DOMON domain in the interval 57-173 (GSLELSWNVS…GTVHLVYGIL (117 aa)). N-linked (GlcNAc...) asparagine glycosylation occurs at asparagine 64. Cystine bridges form between cysteine 154–cysteine 596, cysteine 232–cysteine 283, cysteine 269–cysteine 295, cysteine 390–cysteine 503, cysteine 394–cysteine 565, and cysteine 466–cysteine 488. Asparagine 184 carries an N-linked (GlcNAc...) (complex) asparagine glycan. Residue tyrosine 230 is part of the active site. The Cu(2+) site is built by histidine 262 and histidine 263. Position 333 (histidine 333) interacts with Cu(2+). Asparagine 344 carries N-linked (GlcNAc...) asparagine glycosylation. Histidine 412 is an active-site residue. 3 residues coordinate Cu(2+): histidine 412, histidine 414, and methionine 487. Asparagine 566 is a glycosylation site (N-linked (GlcNAc...) asparagine). The disordered stretch occupies residues 590–617 (EEPTPQCPTSQGRSPAGPTVVSIGGGKG).

The protein belongs to the copper type II ascorbate-dependent monooxygenase family. As to quaternary structure, homotetramer; composed of two disulfide-linked dimers. Cu(2+) serves as cofactor. Post-translationally, N-glycosylated. Proteolytic cleavage after the membrane-anchor leads to the release of the soluble form.

It is found in the cytoplasmic vesicle. It localises to the secretory vesicle lumen. The protein resides in the secretory vesicle. Its subcellular location is the chromaffin granule lumen. The protein localises to the secreted. It is found in the secretory vesicle membrane. It localises to the chromaffin granule membrane. The catalysed reaction is dopamine + 2 L-ascorbate + O2 = (R)-noradrenaline + 2 monodehydro-L-ascorbate radical + H2O. The protein operates within catecholamine biosynthesis; (R)-noradrenaline biosynthesis; (R)-noradrenaline from dopamine: step 1/1. Catalyzes the hydroxylation of dopamine to noradrenaline (also known as norepinephrine), and is thus vital for regulation of these neurotransmitters. The polypeptide is Dopamine beta-hydroxylase (DBH) (Homo sapiens (Human)).